A 150-amino-acid chain; its full sequence is UPF0178 protein Reut_B5138 (150 aa).

This sequence belongs to the UPF0178 family.

The chain is UPF0178 protein Reut_B5138 from Cupriavidus pinatubonensis (strain JMP 134 / LMG 1197) (Cupriavidus necator (strain JMP 134)).